The following is a 416-amino-acid chain: Serine/threonine transporter SstT (416 aa).

Helical transmembrane passes span 15–35 (SLVS…MFMP), 49–69 (VGAL…AAII), 82–102 (ILLL…VASF), 141–161 (ALLD…GIAM), 192–212 (LGIL…ALFG), 217–237 (LVVL…LIVF), 288–308 (VSIP…ITVL), 316–336 (LGME…TISA), and 363–383 (IAMQ…SAET).

The protein belongs to the dicarboxylate/amino acid:cation symporter (DAACS) (TC 2.A.23) family.

The protein resides in the cell inner membrane. The catalysed reaction is L-serine(in) + Na(+)(in) = L-serine(out) + Na(+)(out). It catalyses the reaction L-threonine(in) + Na(+)(in) = L-threonine(out) + Na(+)(out). Involved in the import of serine and threonine into the cell, with the concomitant import of sodium (symport system). This Aeromonas hydrophila subsp. hydrophila (strain ATCC 7966 / DSM 30187 / BCRC 13018 / CCUG 14551 / JCM 1027 / KCTC 2358 / NCIMB 9240 / NCTC 8049) protein is Serine/threonine transporter SstT.